We begin with the raw amino-acid sequence, 167 residues long: Crossover junction endodeoxyribonuclease RuvC (167 aa).

Residues Asp-11, Glu-71, and Asp-143 contribute to the active site. Residues Asp-11, Glu-71, and Asp-143 each contribute to the Mg(2+) site.

This sequence belongs to the RuvC family. As to quaternary structure, homodimer which binds Holliday junction (HJ) DNA. The HJ becomes 2-fold symmetrical on binding to RuvC with unstacked arms; it has a different conformation from HJ DNA in complex with RuvA. In the full resolvosome a probable DNA-RuvA(4)-RuvB(12)-RuvC(2) complex forms which resolves the HJ. Mg(2+) serves as cofactor.

The protein resides in the cytoplasm. The enzyme catalyses Endonucleolytic cleavage at a junction such as a reciprocal single-stranded crossover between two homologous DNA duplexes (Holliday junction).. Functionally, the RuvA-RuvB-RuvC complex processes Holliday junction (HJ) DNA during genetic recombination and DNA repair. Endonuclease that resolves HJ intermediates. Cleaves cruciform DNA by making single-stranded nicks across the HJ at symmetrical positions within the homologous arms, yielding a 5'-phosphate and a 3'-hydroxyl group; requires a central core of homology in the junction. The consensus cleavage sequence is 5'-(A/T)TT(C/G)-3'. Cleavage occurs on the 3'-side of the TT dinucleotide at the point of strand exchange. HJ branch migration catalyzed by RuvA-RuvB allows RuvC to scan DNA until it finds its consensus sequence, where it cleaves and resolves the cruciform DNA. The sequence is that of Crossover junction endodeoxyribonuclease RuvC from Acidiphilium cryptum (strain JF-5).